A 310-amino-acid polypeptide reads, in one-letter code: Ribonuclease HIII (310 aa).

The region spanning 91 to 307 (YNCIGSDEAG…REKAQNLVTK (217 aa)) is the RNase H type-2 domain. Residues Asp-97, Glu-98, and Asp-202 each contribute to the a divalent metal cation site.

The protein belongs to the RNase HII family. RnhC subfamily. Requires Mn(2+) as cofactor. Mg(2+) is required as a cofactor.

The protein localises to the cytoplasm. It carries out the reaction Endonucleolytic cleavage to 5'-phosphomonoester.. Endonuclease that specifically degrades the RNA of RNA-DNA hybrids. This chain is Ribonuclease HIII, found in Staphylococcus haemolyticus (strain JCSC1435).